Reading from the N-terminus, the 398-residue chain is Glycerol-3-phosphate dehydrogenase [NAD(+)] 1 (398 aa).

Residues 50–55 (GSGNWG), Phe138, Lys161, and Ala194 each bind NAD(+). Residue Lys161 coordinates substrate. Lys253 functions as the Proton acceptor in the catalytic mechanism. The NAD(+) site is built by Arg318 and Gln350. Residue 318-319 (RN) coordinates substrate.

Belongs to the NAD-dependent glycerol-3-phosphate dehydrogenase family.

It is found in the cytoplasm. The catalysed reaction is sn-glycerol 3-phosphate + NAD(+) = dihydroxyacetone phosphate + NADH + H(+). This chain is Glycerol-3-phosphate dehydrogenase [NAD(+)] 1 (GPD1), found in Yarrowia lipolytica (strain CLIB 122 / E 150) (Yeast).